The chain runs to 586 residues: Asparagine synthetase [glutamine-hydrolyzing] 2 (586 aa).

C2 acts as the For GATase activity in catalysis. The 184-residue stretch at 2–185 (CGILAVLGCS…PGHLYSSKEK (184 aa)) folds into the Glutamine amidotransferase type-2 domain. L-glutamine contacts are provided by residues 50 to 54 (RLAIV), 75 to 77 (NGE), and D98. In terms of domain architecture, Asparagine synthetase spans 193-516 (PPWFSEAIPS…PQNSARLSVP (324 aa)). ATP is bound by residues L231, V267, and 341–342 (SG).

The enzyme catalyses L-aspartate + L-glutamine + ATP + H2O = L-asparagine + L-glutamate + AMP + diphosphate + H(+). It functions in the pathway amino-acid biosynthesis; L-asparagine biosynthesis; L-asparagine from L-aspartate (L-Gln route): step 1/1. The sequence is that of Asparagine synthetase [glutamine-hydrolyzing] 2 (AS2) from Lotus japonicus (Lotus corniculatus var. japonicus).